We begin with the raw amino-acid sequence, 341 residues long: UDP-3-O-acylglucosamine N-acyltransferase (341 aa).

The active-site Proton acceptor is histidine 239.

This sequence belongs to the transferase hexapeptide repeat family. LpxD subfamily. Homotrimer.

It catalyses the reaction a UDP-3-O-[(3R)-3-hydroxyacyl]-alpha-D-glucosamine + a (3R)-hydroxyacyl-[ACP] = a UDP-2-N,3-O-bis[(3R)-3-hydroxyacyl]-alpha-D-glucosamine + holo-[ACP] + H(+). The protein operates within bacterial outer membrane biogenesis; LPS lipid A biosynthesis. Its function is as follows. Catalyzes the N-acylation of UDP-3-O-acylglucosamine using 3-hydroxyacyl-ACP as the acyl donor. Is involved in the biosynthesis of lipid A, a phosphorylated glycolipid that anchors the lipopolysaccharide to the outer membrane of the cell. This chain is UDP-3-O-acylglucosamine N-acyltransferase, found in Shewanella oneidensis (strain ATCC 700550 / JCM 31522 / CIP 106686 / LMG 19005 / NCIMB 14063 / MR-1).